We begin with the raw amino-acid sequence, 556 residues long: 2-isopropylmalate synthase (556 aa).

The Pyruvate carboxyltransferase domain maps to 33–307 (PIWCSSDLRD…DPELDFSDID (275 aa)). 4 residues coordinate Mg(2+): D42, H246, H248, and N282. Residues 439–556 (ANTPYALISH…SLSQTQAKAA (118 aa)) form a regulatory domain region.

It belongs to the alpha-IPM synthase/homocitrate synthase family. LeuA type 2 subfamily. Homodimer. Mg(2+) is required as a cofactor.

It is found in the cytoplasm. The catalysed reaction is 3-methyl-2-oxobutanoate + acetyl-CoA + H2O = (2S)-2-isopropylmalate + CoA + H(+). Its pathway is amino-acid biosynthesis; L-leucine biosynthesis; L-leucine from 3-methyl-2-oxobutanoate: step 1/4. In terms of biological role, catalyzes the condensation of the acetyl group of acetyl-CoA with 3-methyl-2-oxobutanoate (2-ketoisovalerate) to form 3-carboxy-3-hydroxy-4-methylpentanoate (2-isopropylmalate). This Pseudomonas savastanoi pv. phaseolicola (strain 1448A / Race 6) (Pseudomonas syringae pv. phaseolicola (strain 1448A / Race 6)) protein is 2-isopropylmalate synthase.